Reading from the N-terminus, the 272-residue chain is Putative pyruvate, phosphate dikinase regulatory protein 2 (272 aa).

Residue 154-161 (GVSRTSKT) participates in ADP binding.

The protein belongs to the pyruvate, phosphate/water dikinase regulatory protein family. PDRP subfamily.

It catalyses the reaction N(tele)-phospho-L-histidyl/L-threonyl-[pyruvate, phosphate dikinase] + ADP = N(tele)-phospho-L-histidyl/O-phospho-L-threonyl-[pyruvate, phosphate dikinase] + AMP + H(+). The enzyme catalyses N(tele)-phospho-L-histidyl/O-phospho-L-threonyl-[pyruvate, phosphate dikinase] + phosphate + H(+) = N(tele)-phospho-L-histidyl/L-threonyl-[pyruvate, phosphate dikinase] + diphosphate. Functionally, bifunctional serine/threonine kinase and phosphorylase involved in the regulation of the pyruvate, phosphate dikinase (PPDK) by catalyzing its phosphorylation/dephosphorylation. In Staphylococcus epidermidis (strain ATCC 35984 / DSM 28319 / BCRC 17069 / CCUG 31568 / BM 3577 / RP62A), this protein is Putative pyruvate, phosphate dikinase regulatory protein 2.